The sequence spans 708 residues: Polyribonucleotide nucleotidyltransferase (708 aa).

Mg(2+) is bound by residues D490 and D496. A KH domain is found at 557-619; sequence PRIETMTIPK…KSIDDAIRLI (63 aa). An S1 motif domain is found at 629–699; that stretch reads GEVYKGKVRS…KTGKFKLSRK (71 aa).

This sequence belongs to the polyribonucleotide nucleotidyltransferase family. Requires Mg(2+) as cofactor.

The protein resides in the cytoplasm. It catalyses the reaction RNA(n+1) + phosphate = RNA(n) + a ribonucleoside 5'-diphosphate. Functionally, involved in mRNA degradation. Catalyzes the phosphorolysis of single-stranded polyribonucleotides processively in the 3'- to 5'-direction. In Bacteroides fragilis (strain ATCC 25285 / DSM 2151 / CCUG 4856 / JCM 11019 / LMG 10263 / NCTC 9343 / Onslow / VPI 2553 / EN-2), this protein is Polyribonucleotide nucleotidyltransferase.